We begin with the raw amino-acid sequence, 90 residues long: Probable Fe(2+)-trafficking protein (90 aa).

It belongs to the Fe(2+)-trafficking protein family. In terms of assembly, monomer.

In terms of biological role, could be a mediator in iron transactions between iron acquisition and iron-requiring processes, such as synthesis and/or repair of Fe-S clusters in biosynthetic enzymes. This is Probable Fe(2+)-trafficking protein from Edwardsiella ictaluri (strain 93-146).